We begin with the raw amino-acid sequence, 490 residues long: Glutamate--tRNA ligase (490 aa).

The 'HIGH' region signature appears at 12 to 22 (PSPTGTPHVGL). The 'KMSKS' region signature appears at 256–260 (KLSKR). K259 contributes to the ATP binding site.

It belongs to the class-I aminoacyl-tRNA synthetase family. Glutamate--tRNA ligase type 1 subfamily. In terms of assembly, monomer.

It localises to the cytoplasm. It carries out the reaction tRNA(Glu) + L-glutamate + ATP = L-glutamyl-tRNA(Glu) + AMP + diphosphate. Catalyzes the attachment of glutamate to tRNA(Glu) in a two-step reaction: glutamate is first activated by ATP to form Glu-AMP and then transferred to the acceptor end of tRNA(Glu). The protein is Glutamate--tRNA ligase of Mycobacterium sp. (strain JLS).